The chain runs to 167 residues: NAD(P)H-quinone oxidoreductase subunit J (167 aa).

This sequence belongs to the complex I 30 kDa subunit family. In terms of assembly, NDH-1 can be composed of about 15 different subunits; different subcomplexes with different compositions have been identified which probably have different functions.

The protein localises to the cellular thylakoid membrane. It carries out the reaction a plastoquinone + NADH + (n+1) H(+)(in) = a plastoquinol + NAD(+) + n H(+)(out). It catalyses the reaction a plastoquinone + NADPH + (n+1) H(+)(in) = a plastoquinol + NADP(+) + n H(+)(out). Functionally, NDH-1 shuttles electrons from an unknown electron donor, via FMN and iron-sulfur (Fe-S) centers, to quinones in the respiratory and/or the photosynthetic chain. The immediate electron acceptor for the enzyme in this species is believed to be plastoquinone. Couples the redox reaction to proton translocation, and thus conserves the redox energy in a proton gradient. Cyanobacterial NDH-1 also plays a role in inorganic carbon-concentration. The sequence is that of NAD(P)H-quinone oxidoreductase subunit J from Microcystis aeruginosa (strain NIES-843 / IAM M-2473).